A 346-amino-acid polypeptide reads, in one-letter code: 26S proteasome non-ATPase regulatory subunit 4 (346 aa).

Positions 5 to 190 constitute a VWFA domain; that stretch reads STMICVDNSE…LTDALLQSSV (186 aa). 2 consecutive UIM domains span residues 216–235 and 273–292; these read ENDP…ERAR and TEEQ…NAPA. The interval 290–346 is disordered; sequence APAEQPQVQHEQMDVDGAPAVGGDNLDDLMNNPELLQQIVDDLPAANAEKDDDKEKK. The span at 337 to 346 shows a compositional bias: basic and acidic residues; sequence AEKDDDKEKK.

The protein belongs to the proteasome subunit S5A family. The 26S proteasome is composed of a core protease, known as the 20S proteasome, capped at one or both ends by the 19S regulatory complex (RC). The RC is composed of at least 18 different subunits in two subcomplexes, the base and the lid, which form the portions proximal and distal to the 20S proteolytic core, respectively. In terms of tissue distribution, broadly expressed with high expression in the pharynx, intestine, hypodermis and spermatheca and weak expression in the excretory cell, body wall muscle, vulva and somatic gonad.

It localises to the cytoplasm. It is found in the nucleus. Binds and presumably selects ubiquitin-conjugates for destruction. Required for protein degradation and ubiquitin-proteasome system (UBS) function and regulates proteasomal subunit expression. Involvement in UBS might be cell type specific. Regulator of the autophagy-lysosome pathway that may confer resistance to autophagy by regulating the expression of autophagy-related proteins such as lgg-1, and by regulating lysosome formation, possibly by modulating elt-2 activity. Required for fertility, sperm production, and sex determination through regulation of tra-2 protein. Plays a role in the elimination of paternal mitochondria in fertilized eggs. The protein is 26S proteasome non-ATPase regulatory subunit 4 of Caenorhabditis elegans.